The chain runs to 389 residues: Maintenance of mitochondrial morphology protein 1-1 (389 aa).

Topologically, residues 1–22 are lumenal; the sequence is MSQFVLPAVASEGIINWPFLTG. A helical transmembrane segment spans residues 23–43; sequence FMLGQFSVGLVLLIFVRFFIF. Residues 44–389 lie on the Cytoplasmic side of the membrane; sequence SDQTEPDINT…YRSLQTSPRR (346 aa). An SMP-LTD domain is found at 83-278; that stretch reads QPESLDWFSV…YPEYQQFELP (196 aa). Disordered regions lie at residues 283 to 345 and 360 to 389; these read KTSA…PKFI and FYEM…SPRR. Over residues 330–341 the composition is skewed to polar residues; sequence MSMSSQRPNINN.

The protein belongs to the MMM1 family. Homodimer. Component of the ER-mitochondria encounter structure (ERMES) or MDM complex, composed of MMM1, MDM10, MDM12 and MDM34. An MMM1 homodimer associates with one molecule of MDM12 on each side in a pairwise head-to-tail manner, and the SMP-LTD domains of MMM1 and MDM12 generate a continuous hydrophobic tunnel for phospholipid trafficking.

Its subcellular location is the endoplasmic reticulum membrane. Functionally, component of the ERMES/MDM complex, which serves as a molecular tether to connect the endoplasmic reticulum (ER) and mitochondria. Components of this complex are involved in the control of mitochondrial shape and protein biogenesis, and function in nonvesicular lipid trafficking between the ER and mitochondria. The MDM12-MMM11 subcomplex functions in the major beta-barrel assembly pathway that is responsible for biogenesis of all outer membrane beta-barrel proteins, and acts in a late step after the SAM complex. The MDM10-MDM12-MMM1 subcomplex further acts in the TOM40-specific pathway after the action of the MDM12-MMM1 complex. Essential for establishing and maintaining the structure of mitochondria and maintenance of mtDNA nucleoids. The polypeptide is Maintenance of mitochondrial morphology protein 1-1 (Yarrowia lipolytica (strain CLIB 122 / E 150) (Yeast)).